Here is a 248-residue protein sequence, read N- to C-terminus: Pyridoxine 5'-phosphate synthase (248 aa).

Residue Asn-12 coordinates 3-amino-2-oxopropyl phosphate. 14-15 (DH) contacts 1-deoxy-D-xylulose 5-phosphate. Arg-23 lines the 3-amino-2-oxopropyl phosphate pocket. His-48 serves as the catalytic Proton acceptor. The 1-deoxy-D-xylulose 5-phosphate site is built by Arg-50 and His-55. The active-site Proton acceptor is the Glu-75. Position 105 (Thr-105) interacts with 1-deoxy-D-xylulose 5-phosphate. The active-site Proton donor is His-196. 3-amino-2-oxopropyl phosphate is bound by residues Gly-197 and 218 to 219 (GH).

It belongs to the PNP synthase family. As to quaternary structure, homooctamer; tetramer of dimers.

Its subcellular location is the cytoplasm. It catalyses the reaction 3-amino-2-oxopropyl phosphate + 1-deoxy-D-xylulose 5-phosphate = pyridoxine 5'-phosphate + phosphate + 2 H2O + H(+). It functions in the pathway cofactor biosynthesis; pyridoxine 5'-phosphate biosynthesis; pyridoxine 5'-phosphate from D-erythrose 4-phosphate: step 5/5. In terms of biological role, catalyzes the complicated ring closure reaction between the two acyclic compounds 1-deoxy-D-xylulose-5-phosphate (DXP) and 3-amino-2-oxopropyl phosphate (1-amino-acetone-3-phosphate or AAP) to form pyridoxine 5'-phosphate (PNP) and inorganic phosphate. This is Pyridoxine 5'-phosphate synthase from Azotobacter vinelandii (strain DJ / ATCC BAA-1303).